A 409-amino-acid chain; its full sequence is Argininosuccinate synthase (409 aa).

Residues 11–19 and alanine 38 contribute to the ATP site; that span reads AYSGGLDTS. Tyrosine 91 and serine 96 together coordinate L-citrulline. Residue glycine 121 coordinates ATP. 3 residues coordinate L-aspartate: threonine 123, asparagine 127, and aspartate 128. Residue asparagine 127 coordinates L-citrulline. Residues arginine 131, serine 182, serine 191, glutamate 267, and tyrosine 279 each contribute to the L-citrulline site.

The protein belongs to the argininosuccinate synthase family. Type 1 subfamily. Homotetramer.

The protein localises to the cytoplasm. It catalyses the reaction L-citrulline + L-aspartate + ATP = 2-(N(omega)-L-arginino)succinate + AMP + diphosphate + H(+). The protein operates within amino-acid biosynthesis; L-arginine biosynthesis; L-arginine from L-ornithine and carbamoyl phosphate: step 2/3. The protein is Argininosuccinate synthase of Xanthobacter autotrophicus (strain ATCC BAA-1158 / Py2).